Reading from the N-terminus, the 84-residue chain is Small ribosomal subunit protein uS17 (84 aa).

The protein belongs to the universal ribosomal protein uS17 family. Part of the 30S ribosomal subunit.

In terms of biological role, one of the primary rRNA binding proteins, it binds specifically to the 5'-end of 16S ribosomal RNA. The chain is Small ribosomal subunit protein uS17 from Thermoanaerobacter pseudethanolicus (strain ATCC 33223 / 39E) (Clostridium thermohydrosulfuricum).